A 48-amino-acid polypeptide reads, in one-letter code: M-oxotoxin-Ot1c (48 aa).

It localises to the secreted. Its subcellular location is the target cell membrane. In terms of biological role, disrupts cell membranes, particularly those rich in phosphocholine, through formation of pores. Has antimicrobial activity, hemolytic activity and insecticidal activity. The sequence is that of M-oxotoxin-Ot1c from Oxyopes takobius (Lynx spider).